A 160-amino-acid chain; its full sequence is Cyclic pyranopterin monophosphate synthase (160 aa).

Residues 77-79 (MCH) and 114-115 (ME) each bind substrate. Residue Asp129 is part of the active site.

This sequence belongs to the MoaC family. In terms of assembly, homohexamer; trimer of dimers.

It carries out the reaction (8S)-3',8-cyclo-7,8-dihydroguanosine 5'-triphosphate = cyclic pyranopterin phosphate + diphosphate. The protein operates within cofactor biosynthesis; molybdopterin biosynthesis. Its function is as follows. Catalyzes the conversion of (8S)-3',8-cyclo-7,8-dihydroguanosine 5'-triphosphate to cyclic pyranopterin monophosphate (cPMP). The protein is Cyclic pyranopterin monophosphate synthase of Listeria monocytogenes serotype 4a (strain HCC23).